The following is a 386-amino-acid chain: Phosphoglycerate kinase (386 aa).

Residues 21-23 (DLN), R36, 59-62 (HLGR), R113, and R146 contribute to the substrate site. ATP contacts are provided by residues K197, E314, and 340-343 (GGDT).

Belongs to the phosphoglycerate kinase family. As to quaternary structure, monomer.

The protein resides in the cytoplasm. The enzyme catalyses (2R)-3-phosphoglycerate + ATP = (2R)-3-phospho-glyceroyl phosphate + ADP. The protein operates within carbohydrate degradation; glycolysis; pyruvate from D-glyceraldehyde 3-phosphate: step 2/5. The protein is Phosphoglycerate kinase of Marinobacter nauticus (strain ATCC 700491 / DSM 11845 / VT8) (Marinobacter aquaeolei).